Reading from the N-terminus, the 92-residue chain is Small ribosomal subunit protein uS19c (92 aa).

The protein belongs to the universal ribosomal protein uS19 family.

It is found in the plastid. The protein resides in the chloroplast. In terms of biological role, protein S19 forms a complex with S13 that binds strongly to the 16S ribosomal RNA. The protein is Small ribosomal subunit protein uS19c of Gracilaria tenuistipitata var. liui (Red alga).